Consider the following 227-residue polypeptide: MEALKKIAGVTAAQYVTDGMTIGLGTGSTAYYFVEEIGRRIKEEGLQVVGVTTSSVTTKQAEGLGIPLTSIDDIDCIDLTVDGADEVDKAFNGIKGGGAALLMEKIVATPTKEYIWVVDESKLVDHLGAFKLPVEVVQYGADRLFRVFERAGYKPSFRMKGDKRLITDMQNFIIDLNLGCIENPCEFGRLLDQTVGVVEHGLFNGMVDKVIVAGQAGVTVLEANQST.

Substrate-binding positions include Thr-26 to Thr-29, Asp-82 to Asp-85, and Lys-95 to Gly-98. The active-site Proton acceptor is the Glu-104. Residue Lys-122 participates in substrate binding.

This sequence belongs to the ribose 5-phosphate isomerase family. In terms of assembly, homodimer.

The enzyme catalyses aldehydo-D-ribose 5-phosphate = D-ribulose 5-phosphate. The protein operates within carbohydrate degradation; pentose phosphate pathway; D-ribose 5-phosphate from D-ribulose 5-phosphate (non-oxidative stage): step 1/1. Functionally, catalyzes the reversible conversion of ribose-5-phosphate to ribulose 5-phosphate. The protein is Ribose-5-phosphate isomerase A of Streptococcus equi subsp. equi (strain 4047).